A 403-amino-acid polypeptide reads, in one-letter code: Coiled-coil domain-containing glutamate-rich protein 1 (403 aa).

The span at 1–11 (MTQTVNEREDP) shows a compositional bias: basic and acidic residues. 5 disordered regions span residues 1-23 (MTQT…ASSI), 51-70 (IEYE…GSWF), 134-164 (RPPG…PPID), 202-241 (QQEK…VEED), and 261-350 (PALM…GEQR). Over residues 137–157 (GRKKRWGRRGRGLRRHPRRSF) the composition is skewed to basic residues. Residues 209–220 (QQAALRAQQAQE) are compositionally biased toward low complexity. The span at 261–271 (PALMQHNQSPT) shows a compositional bias: polar residues. The span at 275 to 346 (VEEEEKNVDD…YMLEETGLEE (72 aa)) shows a compositional bias: acidic residues. Residues 292–353 (CDEKEESEEE…LEEGEQRAEE (62 aa)) adopt a coiled-coil conformation.

As to expression, expressed in testis.

The protein resides in the nucleus. Functionally, regulator of histone epigenetic modifications and chromatin compaction into the sperm head, required for histone-to-protamine (HTP) transition. HTP is a key event in which somatic histones are first replaced by testis-specific histone variants, then transition proteins (TNPs) are incorporated into the spermatid nucleus, and finally protamines (PRMs) replace the TNPs to promote chromatin condensation. The sequence is that of Coiled-coil domain-containing glutamate-rich protein 1 (Ccer1) from Mus musculus (Mouse).